An 876-amino-acid polypeptide reads, in one-letter code: Valine--tRNA ligase (876 aa).

A 'HIGH' region motif is present at residues 44 to 54 (PNVTGKLHLGH). The 'KMSKS' region signature appears at 520-524 (KMSKS). Lys523 lines the ATP pocket. Residues 805–876 (LEGLIDMDKE…VKSRIEQLKA (72 aa)) adopt a coiled-coil conformation.

It belongs to the class-I aminoacyl-tRNA synthetase family. ValS type 1 subfamily. Monomer.

It localises to the cytoplasm. It carries out the reaction tRNA(Val) + L-valine + ATP = L-valyl-tRNA(Val) + AMP + diphosphate. In terms of biological role, catalyzes the attachment of valine to tRNA(Val). As ValRS can inadvertently accommodate and process structurally similar amino acids such as threonine, to avoid such errors, it has a 'posttransfer' editing activity that hydrolyzes mischarged Thr-tRNA(Val) in a tRNA-dependent manner. This is Valine--tRNA ligase from Staphylococcus epidermidis (strain ATCC 35984 / DSM 28319 / BCRC 17069 / CCUG 31568 / BM 3577 / RP62A).